The primary structure comprises 148 residues: Nucleoside diphosphate kinase A (148 aa).

ATP is bound by residues K9, F57, R85, T91, R102, and N112. H115 (pros-phosphohistidine intermediate) is an active-site residue.

This sequence belongs to the NDK family. The cofactor is Mg(2+).

It catalyses the reaction a 2'-deoxyribonucleoside 5'-diphosphate + ATP = a 2'-deoxyribonucleoside 5'-triphosphate + ADP. The enzyme catalyses a ribonucleoside 5'-diphosphate + ATP = a ribonucleoside 5'-triphosphate + ADP. Functionally, major role in the synthesis of nucleoside triphosphates other than ATP. The ATP gamma phosphate is transferred to the NDP beta phosphate via a ping-pong mechanism, using a phosphorylated active-site intermediate. The polypeptide is Nucleoside diphosphate kinase A (Flaveria bidentis (Coastal plain yellowtops)).